Consider the following 80-residue polypeptide: Cell division protein ZapB (80 aa).

Residues 3 to 80 (FEVLEQLESK…ALLGKMDEVE (78 aa)) adopt a coiled-coil conformation.

Belongs to the ZapB family. In terms of assembly, homodimer. The ends of the coiled-coil dimer bind to each other, forming polymers. Interacts with FtsZ.

It localises to the cytoplasm. Non-essential, abundant cell division factor that is required for proper Z-ring formation. It is recruited early to the divisome by direct interaction with FtsZ, stimulating Z-ring assembly and thereby promoting cell division earlier in the cell cycle. Its recruitment to the Z-ring requires functional FtsA or ZipA. This is Cell division protein ZapB from Vibrio parahaemolyticus serotype O3:K6 (strain RIMD 2210633).